The primary structure comprises 324 residues: Mitochondrial thiamine pyrophosphate carrier 1 (324 aa).

Solcar repeat units follow at residues 12–110 (GNRI…ISSA), 119–205 (PQPV…LRSP), and 212–307 (PFGT…VLGL). The next 6 membrane-spanning stretches (helical) occupy residues 15–35 (IQVV…VAPL), 79–99 (ITGL…YGGI), 125–145 (FISG…LDLL), 182–202 (TAAI…YEAL), 218–238 (AGAG…LDLV), and 282–299 (GLTV…VTMW).

This sequence belongs to the mitochondrial carrier (TC 2.A.29) family.

The protein resides in the mitochondrion inner membrane. Mitochondrial transporter that mediates uptake of thiamine pyrophosphate (ThPP) into mitochondria. In Ajellomyces capsulatus (strain NAm1 / WU24) (Darling's disease fungus), this protein is Mitochondrial thiamine pyrophosphate carrier 1 (TPC1).